Consider the following 189-residue polypeptide: Elongation factor P (189 aa).

It belongs to the elongation factor P family.

Its subcellular location is the cytoplasm. Its pathway is protein biosynthesis; polypeptide chain elongation. Functionally, involved in peptide bond synthesis. Stimulates efficient translation and peptide-bond synthesis on native or reconstituted 70S ribosomes in vitro. Probably functions indirectly by altering the affinity of the ribosome for aminoacyl-tRNA, thus increasing their reactivity as acceptors for peptidyl transferase. The protein is Elongation factor P of Pseudomonas putida (strain GB-1).